Reading from the N-terminus, the 1669-residue chain is Dystrophin, isoform B (1669 aa).

Residues 1–11 (MTAKPPPPIPP) are compositionally biased toward pro residues. Disordered stretches follow at residues 1–28 (MTAKPPPPIPPTLGGDDSGTHGPKLAPE), 43–243 (RGQQ…SEDA), 327–356 (RAQAQQQSLLNNSSSSSSNSQVEQSMRSTI), 389–417 (GGGGGNSSTGNAVANSGTSGSQQPPMPLS), and 481–508 (SGALSREELRMRRRSSHDETQLTQNSSG). The span at 53 to 62 (SQEQHATNTL) shows a compositional bias: polar residues. The span at 118 to 131 (GLPPTMRQPPPLPR) shows a compositional bias: pro residues. Residues 132 to 147 (KPASTQSSAQNSAQSS) are compositionally biased toward low complexity. Positions 153 to 166 (KFKDKPPPPPEKHS) are enriched in basic and acidic residues. 2 stretches are compositionally biased toward low complexity: residues 328–347 (AQAQQQSLLNNSSSSSSNSQ) and 396–405 (STGNAVANSG). Residues 485–500 (SREELRMRRRSSHDET) show a composition bias toward basic and acidic residues. Spectrin repeat units follow at residues 541-643 (QRFE…KQLH), 650-747 (QSFD…NRLE), 754-883 (NALL…HRLD), and 890-990 (RQFQ…KVLC). A disordered region spans residues 827–851 (VSDTSDTEANHDSDSRYMSAEEQSR). The segment at 994–1024 (AQQTHENGDDGRTTSNSGTIGPLPNLGQSVK) is disordered. The WW domain maps to 1021–1054 (QSVKPPWERATTAANVPYYIDHERETTHWDHPEM). A ZZ-type zinc finger spans residues 1279–1335 (KHQAKCNICKEYPIVGFRYRCLKCFNFDMCQKCFFFGRNAKNHKLTHPMHEYCTTTT). Residues Cys1284, Cys1287, Cys1299, Cys1302, Cys1308, Cys1311, His1321, and His1325 each coordinate Zn(2+). Ser1379 is modified (phosphoserine). Disordered stretches follow at residues 1488–1516 (EQSGMPEDSNGMQHSSSSMTGLSGQGEQG) and 1559–1669 (DEPN…ELQK). Composition is skewed to polar residues over residues 1497 to 1509 (NGMQHSSSSMTGL) and 1580 to 1611 (ALNSKPNTLQTRSVTASQLNTDSPAKMNQQNG). The segment covering 1630–1641 (QELESINDDLED) has biased composition (acidic residues). The segment covering 1642–1660 (SSSSNTTNTTTTTTTTATT) has biased composition (low complexity).

As to quaternary structure, component of the dystrophin associated protein complex (DAPC). Interacts with Dg, via the Dg WW domain binding sites. As to expression, expressed in neuronally derived tissues, mainly the CNS and the brain of stage 16 embryos. Lower level expression is seen in the sensory organs. Expression is absent from the musculature. In larvae, expression is predominant throughout the neuropil and brain and in the eye antennal disks.

The protein resides in the cell membrane. Its subcellular location is the sarcolemma. It localises to the cytoplasm. It is found in the cytoskeleton. Its function is as follows. Required for the maintenance of appropriate synaptic retrograde communication and the stabilization of muscle cell architecture or physiology. May play a role in anchoring the cytoskeleton to the plasma membrane. The chain is Dystrophin, isoform B (Dys) from Drosophila melanogaster (Fruit fly).